Here is a 315-residue protein sequence, read N- to C-terminus: 4-hydroxy-3-methylbut-2-enyl diphosphate reductase (315 aa).

C12 is a binding site for [4Fe-4S] cluster. H41 and H74 together coordinate (2E)-4-hydroxy-3-methylbut-2-enyl diphosphate. Dimethylallyl diphosphate contacts are provided by H41 and H74. Positions 41 and 74 each coordinate isopentenyl diphosphate. C96 lines the [4Fe-4S] cluster pocket. H124 is a binding site for (2E)-4-hydroxy-3-methylbut-2-enyl diphosphate. H124 serves as a coordination point for dimethylallyl diphosphate. H124 serves as a coordination point for isopentenyl diphosphate. The Proton donor role is filled by E126. Position 168 (T168) interacts with (2E)-4-hydroxy-3-methylbut-2-enyl diphosphate. C198 lines the [4Fe-4S] cluster pocket. (2E)-4-hydroxy-3-methylbut-2-enyl diphosphate contacts are provided by S226, S227, N228, and S270. Residues S226, S227, N228, and S270 each coordinate dimethylallyl diphosphate. S226, S227, N228, and S270 together coordinate isopentenyl diphosphate.

This sequence belongs to the IspH family. The cofactor is [4Fe-4S] cluster.

It carries out the reaction isopentenyl diphosphate + 2 oxidized [2Fe-2S]-[ferredoxin] + H2O = (2E)-4-hydroxy-3-methylbut-2-enyl diphosphate + 2 reduced [2Fe-2S]-[ferredoxin] + 2 H(+). The catalysed reaction is dimethylallyl diphosphate + 2 oxidized [2Fe-2S]-[ferredoxin] + H2O = (2E)-4-hydroxy-3-methylbut-2-enyl diphosphate + 2 reduced [2Fe-2S]-[ferredoxin] + 2 H(+). Its pathway is isoprenoid biosynthesis; dimethylallyl diphosphate biosynthesis; dimethylallyl diphosphate from (2E)-4-hydroxy-3-methylbutenyl diphosphate: step 1/1. The protein operates within isoprenoid biosynthesis; isopentenyl diphosphate biosynthesis via DXP pathway; isopentenyl diphosphate from 1-deoxy-D-xylulose 5-phosphate: step 6/6. Its function is as follows. Catalyzes the conversion of 1-hydroxy-2-methyl-2-(E)-butenyl 4-diphosphate (HMBPP) into a mixture of isopentenyl diphosphate (IPP) and dimethylallyl diphosphate (DMAPP). Acts in the terminal step of the DOXP/MEP pathway for isoprenoid precursor biosynthesis. The sequence is that of 4-hydroxy-3-methylbut-2-enyl diphosphate reductase from Pseudomonas fluorescens (strain ATCC BAA-477 / NRRL B-23932 / Pf-5).